Here is a 460-residue protein sequence, read N- to C-terminus: Probable carboxylesterase 11 (460 aa).

Composition is skewed to polar residues over residues 26–35 and 132–145; these read QSSGDESSSD and NSYG…SPEA. Disordered stretches follow at residues 26-52 and 132-161; these read QSSG…APNP and NSYG…SSGG. The Involved in the stabilization of the negatively charged intermediate by the formation of the oxyanion hole motif lies at 173 to 175; that stretch reads HGG. Residues S289, D392, and H422 contribute to the active site.

Belongs to the 'GDXG' lipolytic enzyme family. As to expression, expressed in roots, leaves, stems, flowers and siliques.

The catalysed reaction is a carboxylic ester + H2O = an alcohol + a carboxylate + H(+). In terms of biological role, carboxylesterase acting on esters with varying acyl chain length. The protein is Probable carboxylesterase 11 (CXE11) of Arabidopsis thaliana (Mouse-ear cress).